Consider the following 373-residue polypeptide: Glutamate 5-kinase (373 aa).

K15 contributes to the ATP binding site. Positions 54, 141, and 153 each coordinate substrate. ATP contacts are provided by residues S173–D174 and T215–K221. Positions R280–K358 constitute a PUA domain.

It belongs to the glutamate 5-kinase family.

It is found in the cytoplasm. The catalysed reaction is L-glutamate + ATP = L-glutamyl 5-phosphate + ADP. It functions in the pathway amino-acid biosynthesis; L-proline biosynthesis; L-glutamate 5-semialdehyde from L-glutamate: step 1/2. Its function is as follows. Catalyzes the transfer of a phosphate group to glutamate to form L-glutamate 5-phosphate. The chain is Glutamate 5-kinase from Syntrophotalea carbinolica (strain DSM 2380 / NBRC 103641 / GraBd1) (Pelobacter carbinolicus).